The following is a 204-amino-acid chain: COBRA-like protein 5 (204 aa).

An N-terminal signal peptide occupies residues 1 to 24; the sequence is MESLFSTMIVLLLVSFSCLISTEA. N-linked (GlcNAc...) asparagine glycans are attached at residues Asn-31 and Asn-195.

The protein belongs to the COBRA family. Expressed in roots, stems, leaves, flowers and siliques.

In Arabidopsis thaliana (Mouse-ear cress), this protein is COBRA-like protein 5 (COBL5).